The primary structure comprises 119 residues: Large ribosomal subunit protein bL20 (119 aa).

This sequence belongs to the bacterial ribosomal protein bL20 family.

Binds directly to 23S ribosomal RNA and is necessary for the in vitro assembly process of the 50S ribosomal subunit. It is not involved in the protein synthesizing functions of that subunit. The sequence is that of Large ribosomal subunit protein bL20 from Deinococcus geothermalis (strain DSM 11300 / CIP 105573 / AG-3a).